We begin with the raw amino-acid sequence, 649 residues long: Mediator of RNA polymerase II transcription subunit 17 (649 aa).

Residues 51 to 79 (QGSGSEEEEAAGPDGDAPDWGGAGADQDD) form a disordered region.

This sequence belongs to the Mediator complex subunit 17 family. Component of the Mediator complex, which is composed of MED1, MED4, MED6, MED7, MED8, MED9, MED10, MED11, MED12, MED13, MED13L, MED14, MED15, MED16, MED17, MED18, MED19, MED20, MED21, MED22, MED23, MED24, MED25, MED26, MED27, MED29, MED30, MED31, CCNC, CDK8 and CDC2L6/CDK11. The MED12, MED13, CCNC and CDK8 subunits form a distinct module termed the CDK8 module. Mediator containing the CDK8 module is less active than Mediator lacking this module in supporting transcriptional activation. Individual preparations of the Mediator complex lacking one or more distinct subunits have been variously termed ARC, CRSP, DRIP, PC2, SMCC and TRAP. Interacts with STAT2. Interacts with GATA1 and PPARG.

The protein resides in the nucleus. Functionally, component of the Mediator complex, a coactivator involved in the regulated transcription of nearly all RNA polymerase II-dependent genes. Mediator functions as a bridge to convey information from gene-specific regulatory proteins to the basal RNA polymerase II transcription machinery. Mediator is recruited to promoters by direct interactions with regulatory proteins and serves as a scaffold for the assembly of a functional preinitiation complex with RNA polymerase II and the general transcription factors. In Mus musculus (Mouse), this protein is Mediator of RNA polymerase II transcription subunit 17 (Med17).